The sequence spans 556 residues: 2-succinyl-5-enolpyruvyl-6-hydroxy-3-cyclohexene-1-carboxylate synthase (556 aa).

The protein belongs to the TPP enzyme family. MenD subfamily. In terms of assembly, homodimer. The cofactor is Mg(2+). Mn(2+) is required as a cofactor. Requires thiamine diphosphate as cofactor.

The enzyme catalyses isochorismate + 2-oxoglutarate + H(+) = 5-enolpyruvoyl-6-hydroxy-2-succinyl-cyclohex-3-ene-1-carboxylate + CO2. Its pathway is quinol/quinone metabolism; 1,4-dihydroxy-2-naphthoate biosynthesis; 1,4-dihydroxy-2-naphthoate from chorismate: step 2/7. It functions in the pathway quinol/quinone metabolism; menaquinone biosynthesis. Functionally, catalyzes the thiamine diphosphate-dependent decarboxylation of 2-oxoglutarate and the subsequent addition of the resulting succinic semialdehyde-thiamine pyrophosphate anion to isochorismate to yield 2-succinyl-5-enolpyruvyl-6-hydroxy-3-cyclohexene-1-carboxylate (SEPHCHC). This chain is 2-succinyl-5-enolpyruvyl-6-hydroxy-3-cyclohexene-1-carboxylate synthase, found in Staphylococcus haemolyticus (strain JCSC1435).